The sequence spans 439 residues: L-cysteine:1D-myo-inositol 2-amino-2-deoxy-alpha-D-glucopyranoside ligase 2 (439 aa).

Cys-60 contacts Zn(2+). Residues 60–63 (CGIT), Thr-75, and 98–100 (NVT) each bind L-cysteinyl-5'-AMP. The 'HIGH' region signature appears at 62-72 (ITPYDSTHLGH). A 'ERGGDP' region motif is present at residues 203-208 (ERGGDP). Residue Trp-243 coordinates L-cysteinyl-5'-AMP. Cys-247 is a binding site for Zn(2+). L-cysteinyl-5'-AMP is bound at residue 265 to 267 (GVD). His-272 lines the Zn(2+) pocket. Ile-299 serves as a coordination point for L-cysteinyl-5'-AMP. Positions 305–309 (KMSKS) match the 'KMSKS' region motif.

It belongs to the class-I aminoacyl-tRNA synthetase family. MshC subfamily. Monomer. It depends on Zn(2+) as a cofactor.

The enzyme catalyses 1D-myo-inositol 2-amino-2-deoxy-alpha-D-glucopyranoside + L-cysteine + ATP = 1D-myo-inositol 2-(L-cysteinylamino)-2-deoxy-alpha-D-glucopyranoside + AMP + diphosphate + H(+). Its function is as follows. Catalyzes the ATP-dependent condensation of GlcN-Ins and L-cysteine to form L-Cys-GlcN-Ins. The polypeptide is L-cysteine:1D-myo-inositol 2-amino-2-deoxy-alpha-D-glucopyranoside ligase 2 (Corynebacterium urealyticum (strain ATCC 43042 / DSM 7109)).